A 170-amino-acid chain; its full sequence is Dual-action ribosomal maturation protein DarP (170 aa).

This sequence belongs to the DarP family.

The protein localises to the cytoplasm. In terms of biological role, member of a network of 50S ribosomal subunit biogenesis factors which assembles along the 30S-50S interface, preventing incorrect 23S rRNA structures from forming. Promotes peptidyl transferase center (PTC) maturation. The polypeptide is Dual-action ribosomal maturation protein DarP (Neisseria meningitidis serogroup A / serotype 4A (strain DSM 15465 / Z2491)).